The chain runs to 243 residues: uncharacterized protein (243 aa).

The N-terminal stretch at 1–16 is a signal peptide; it reads MKHFIILFLLLFVTAG. The N-palmitoyl cysteine moiety is linked to residue Cys17. The S-diacylglycerol cysteine moiety is linked to residue Cys17.

Its subcellular location is the cell membrane. This is an uncharacterized protein from Bacillus subtilis (strain 168).